Here is a 494-residue protein sequence, read N- to C-terminus: Neuronal pentraxin receptor (494 aa).

The Cytoplasmic portion of the chain corresponds to 1–2 (MK). A helical; Signal-anchor for type II membrane protein transmembrane segment spans residues 3–23 (FLAVLLAAGMLAFLGAVICII). Residues 24-494 (ASVPLAASPA…FDVCKRRAKA (471 aa)) are Extracellular-facing. A disordered region spans residues 37–80 (PGGTDNASAASAAGAPGPQRSLSALQGAGGSAGPSVLPGEPAAS). A glycan (N-linked (GlcNAc...) asparagine) is linked at N42. Composition is skewed to low complexity over residues 43-62 (ASAASAAGAPGPQRSLSALQ) and 69-80 (GPSVLPGEPAAS). N-linked (GlcNAc...) asparagine glycosylation is present at N211. The Pentraxin (PTX) domain occupies 286 to 488 (DAFKVSIPIR…GAKKAAFDVC (203 aa)). C316 and C377 form a disulfide bridge. Ca(2+) is bound by residues N341, E419, Q420, D421, and Q431. N-linked (GlcNAc...) asparagine glycosylation occurs at N457.

As to quaternary structure, interacts with KLHL2. Heteropentamer with NPTX1 and/or NPTX2. Also binds taipoxin-associated calcium-binding protein 49 (TCBP49/RCN2). The cofactor is Ca(2+). Post-translationally, N-glycosylated. In terms of processing, ubiquitinated by a cullin-RING-based BCR (BTB-CUL3-RBX1) E3 ubiquitin-protein ligase complex containing KLHL2. Brain specific.

It localises to the membrane. Functionally, may be involved in mediating uptake of synaptic material during synapse remodeling or in mediating the synaptic clustering of AMPA glutamate receptors at a subset of excitatory synapses. This Rattus norvegicus (Rat) protein is Neuronal pentraxin receptor (Nptxr).